Here is a 499-residue protein sequence, read N- to C-terminus: Cytochrome P450 2M1 (499 aa).

Residue cysteine 441 participates in heme binding.

This sequence belongs to the cytochrome P450 family. Heme is required as a cofactor. In terms of tissue distribution, in kidney and in liver from juvenile and sexually mature trout from both sexes.

It is found in the endoplasmic reticulum membrane. It localises to the microsome membrane. It catalyses the reaction an organic molecule + reduced [NADPH--hemoprotein reductase] + O2 = an alcohol + oxidized [NADPH--hemoprotein reductase] + H2O + H(+). Its function is as follows. Has (omega-6)-hydroxylation activity toward lauric acid. This Oncorhynchus mykiss (Rainbow trout) protein is Cytochrome P450 2M1 (cyp2m1).